A 256-amino-acid polypeptide reads, in one-letter code: Trypsin CFT-1 (256 aa).

Residues 1–17 (MRVTLALVALCLASVAA) form the signal peptide. Residues 18–24 (LPEKQQR) constitute a propeptide, activation peptide. Positions 25-256 (IVGGSVTTIE…RFTAWIQANA (232 aa)) constitute a Peptidase S1 domain. A disulfide bridge connects residues C55 and C71. Residues H70 and D115 each act as charge relay system in the active site. 2 disulfides stabilise this stretch: C180–C197 and C209–C233. Residue S213 is the Charge relay system of the active site.

It belongs to the peptidase S1 family.

Its subcellular location is the secreted. The protein resides in the extracellular space. The enzyme catalyses Preferential cleavage: Arg-|-Xaa, Lys-|-Xaa.. Functionally, responsible for the activation of delta-endotoxin from Bacillus thuringiensis. In Choristoneura fumiferana (Spruce budworm moth), this protein is Trypsin CFT-1.